The following is a 178-amino-acid chain: Mediator of RNA polymerase II transcription subunit 28 (178 aa).

The interval 1–25 (MAAPLGGMFSGQQPGPPQPPPGLLG) is disordered. A coiled-coil region spans residues 109-145 (QVIKEDVSELRNELQRKDALVQKHLTKLRHWQQVLED).

It belongs to the Mediator complex subunit 28 family. As to quaternary structure, component of the Mediator complex, which is composed of MED1, MED4, MED6, MED7, MED8, MED9, MED10, MED11, MED12, MED13, MED13L, MED14, MED15, MED16, MED17, MED18, MED19, MED20, MED21, MED22, MED23, MED24, MED25, MED26, MED27, MED29, MED30, MED31, CCNC, CDK8 and CDC2L6/CDK11. The MED12, MED13, CCNC and CDK8 subunits form a distinct module termed the CDK8 module. Mediator containing the CDK8 module is less active than Mediator lacking this module in supporting transcriptional activation. Individual preparations of the Mediator complex lacking one or more distinct subunits have been variously termed ARC, CRSP, DRIP, PC2, SMCC and TRAP. Forms a ternary complex with NF2/merlin and GRB2. Binds to actin.

It is found in the nucleus. Its subcellular location is the cytoplasm. The protein resides in the membrane. Its function is as follows. Component of the Mediator complex, a coactivator involved in the regulated transcription of nearly all RNA polymerase II-dependent genes. Mediator functions as a bridge to convey information from gene-specific regulatory proteins to the basal RNA polymerase II transcription machinery. Mediator is recruited to promoters by direct interactions with regulatory proteins and serves as a scaffold for the assembly of a functional preinitiation complex with RNA polymerase II and the general transcription factors. May be part of a complex containing NF2/merlin that participates in cellular signaling to the actin cytoskeleton downstream of tyrosine kinase signaling pathways. The chain is Mediator of RNA polymerase II transcription subunit 28 (MED28) from Bos taurus (Bovine).